The sequence spans 315 residues: 2,3-dihydroxyphenylpropionate/2,3-dihydroxicinnamic acid 1,2-dioxygenase (315 aa).

Residue histidine 118 is the Proton donor of the active site. Catalysis depends on histidine 182, which acts as the Proton acceptor.

It belongs to the LigB/MhpB extradiol dioxygenase family. Homotetramer. It depends on Fe(2+) as a cofactor.

It catalyses the reaction 3-(2,3-dihydroxyphenyl)propanoate + O2 = (2Z,4E)-2-hydroxy-6-oxonona-2,4-dienedioate + H(+). The enzyme catalyses (2E)-3-(2,3-dihydroxyphenyl)prop-2-enoate + O2 = (2Z,4E,7E)-2-hydroxy-6-oxonona-2,4,7-trienedioate + H(+). It functions in the pathway aromatic compound metabolism; 3-phenylpropanoate degradation. Its function is as follows. Catalyzes the non-heme iron(II)-dependent oxidative cleavage of 2,3-dihydroxyphenylpropionic acid and 2,3-dihydroxicinnamic acid into 2-hydroxy-6-ketononadienedioate and 2-hydroxy-6-ketononatrienedioate, respectively. This Mycolicibacterium gilvum (strain PYR-GCK) (Mycobacterium gilvum (strain PYR-GCK)) protein is 2,3-dihydroxyphenylpropionate/2,3-dihydroxicinnamic acid 1,2-dioxygenase.